The sequence spans 557 residues: Trigger factor (557 aa).

One can recognise a PPIase FKBP-type domain in the interval 169–255 (GDVVVIDFQA…LKEIKTKELP (87 aa)). The segment at 438 to 557 (WVDSEGNPTE…KAGKKSKKDK (120 aa)) is disordered. The segment covering 455–466 (SEGEDRQERSES) has biased composition (basic and acidic residues).

It belongs to the FKBP-type PPIase family. Tig subfamily.

The protein resides in the cytoplasm. The catalysed reaction is [protein]-peptidylproline (omega=180) = [protein]-peptidylproline (omega=0). In terms of biological role, involved in protein export. Acts as a chaperone by maintaining the newly synthesized protein in an open conformation. Functions as a peptidyl-prolyl cis-trans isomerase. The polypeptide is Trigger factor (Synechococcus sp. (strain JA-3-3Ab) (Cyanobacteria bacterium Yellowstone A-Prime)).